Reading from the N-terminus, the 340-residue chain is DNA-directed RNA polymerase subunit alpha (340 aa).

An alpha N-terminal domain (alpha-NTD) region spans residues 1–236 (MLSLSKNWNT…EQLQLFISFE (236 aa)). Residues 251 to 340 (FSPYLLKRVD…LSKRYEDSYN (90 aa)) are alpha C-terminal domain (alpha-CTD).

It belongs to the RNA polymerase alpha chain family. Homodimer. The RNAP catalytic core consists of 2 alpha, 1 beta, 1 beta' and 1 omega subunit. When a sigma factor is associated with the core the holoenzyme is formed, which can initiate transcription.

It catalyses the reaction RNA(n) + a ribonucleoside 5'-triphosphate = RNA(n+1) + diphosphate. DNA-dependent RNA polymerase catalyzes the transcription of DNA into RNA using the four ribonucleoside triphosphates as substrates. The polypeptide is DNA-directed RNA polymerase subunit alpha (Rickettsia rickettsii (strain Iowa)).